The primary structure comprises 456 residues: Trigger factor (456 aa).

A PPIase FKBP-type domain is found at 192–277; sequence GDTVVIDFVG…IHEVKTKEVP (86 aa).

The protein belongs to the FKBP-type PPIase family. Tig subfamily.

The protein resides in the cytoplasm. The catalysed reaction is [protein]-peptidylproline (omega=180) = [protein]-peptidylproline (omega=0). Involved in protein export. Acts as a chaperone by maintaining the newly synthesized protein in an open conformation. Functions as a peptidyl-prolyl cis-trans isomerase. This chain is Trigger factor, found in Streptococcus pyogenes serotype M2 (strain MGAS10270).